A 79-amino-acid chain; its full sequence is uncharacterized protein (79 aa).

A run of 2 helical transmembrane segments spans residues 28–48 (CIIL…ALLA) and 51–71 (VALT…AFTV).

Its subcellular location is the cell membrane. This is an uncharacterized protein from Methanocaldococcus jannaschii (strain ATCC 43067 / DSM 2661 / JAL-1 / JCM 10045 / NBRC 100440) (Methanococcus jannaschii).